Reading from the N-terminus, the 829-residue chain is Periplasmic nitrate reductase (829 aa).

The tat-type signal signal peptide spans 1–30; the sequence is MKMTRRAFVKANAAASAAAVAGITLPASAA. In terms of domain architecture, 4Fe-4S Mo/W bis-MGD-type spans 41-97; the sequence is ITWDKAPCRFCGTGCSVLVGTQNGKVVATQGDPEAPVNKGLNCIKGYFLSKIMYGQD. [4Fe-4S] cluster-binding residues include Cys-48, Cys-51, Cys-55, and Cys-83. Mo-bis(molybdopterin guanine dinucleotide) is bound by residues Lys-85, Gln-152, Asn-177, Cys-181, 214–221, 245–249, 264–266, Met-374, Gln-378, Asn-484, 510–511, Lys-533, Asp-560, and 718–727; these read WGSNMAEM, STYYH, QSD, SD, and TGRVLEHWHT. Phe-794 contacts substrate. Mo-bis(molybdopterin guanine dinucleotide) contacts are provided by Asn-802 and Lys-819.

It belongs to the prokaryotic molybdopterin-containing oxidoreductase family. NasA/NapA/NarB subfamily. As to quaternary structure, component of the periplasmic nitrate reductase NapAB complex composed of NapA and NapB. The cofactor is [4Fe-4S] cluster. Mo-bis(molybdopterin guanine dinucleotide) serves as cofactor. In terms of processing, predicted to be exported by the Tat system. The position of the signal peptide cleavage has not been experimentally proven.

Its subcellular location is the periplasm. The catalysed reaction is 2 Fe(II)-[cytochrome] + nitrate + 2 H(+) = 2 Fe(III)-[cytochrome] + nitrite + H2O. Its function is as follows. Catalytic subunit of the periplasmic nitrate reductase complex NapAB. Receives electrons from NapB and catalyzes the reduction of nitrate to nitrite. The sequence is that of Periplasmic nitrate reductase from Vibrio vulnificus (strain CMCP6).